The primary structure comprises 572 residues: Mitochondrial distribution and morphology protein 34 (572 aa).

One can recognise an SMP-LTD domain in the interval 1 to 195 (MAFNFNWSPL…LPAIIHRLSL (195 aa)). 4 disordered regions span residues 212–236 (TASANGEGPGQDPLASPPQDPVDAL), 321–426 (VGSM…PDND), 477–522 (SATP…DNPT), and 553–572 (CGPFWDRHSQEESPPPAYGH). Positions 330 to 348 (SASMVSSQSRSSTPSHTFS) are enriched in low complexity. A compositionally biased stretch (basic residues) spans 358–370 (RHSKAHARKRKKR). Positions 371–381 (VVDLRRPKTTD) are enriched in basic and acidic residues. Polar residues-rich tracts occupy residues 387–400 (SDESSFTESTSAPS) and 500–511 (DSSAGSSRQLPS).

It belongs to the MDM34 family. As to quaternary structure, component of the ER-mitochondria encounter structure (ERMES) or MDM complex, composed of mmm1, mdm10, mdm12 and mdm34.

The protein resides in the mitochondrion outer membrane. In terms of biological role, component of the ERMES/MDM complex, which serves as a molecular tether to connect the endoplasmic reticulum (ER) and mitochondria. Components of this complex are involved in the control of mitochondrial shape and protein biogenesis, and function in nonvesicular lipid trafficking between the ER and mitochondria. Mdm34 is required for the interaction of the ER-resident membrane protein mmm1 and the outer mitochondrial membrane-resident beta-barrel protein mdm10. The sequence is that of Mitochondrial distribution and morphology protein 34 from Aspergillus fumigatus (strain CBS 144.89 / FGSC A1163 / CEA10) (Neosartorya fumigata).